Consider the following 135-residue polypeptide: Protein Wnt-7b (135 aa).

Disulfide bonds link cysteine 3–cysteine 17 and cysteine 5–cysteine 12. Serine 9 carries O-palmitoleoyl serine; by PORCN lipidation. The disordered linker stretch occupies residues 41-69; that stretch reads VEVVRANRLRQPTFLKIKKVRSYQKPMET. 3 cysteine pairs are disulfide-bonded: cysteine 81/cysteine 112, cysteine 97/cysteine 107, and cysteine 134/cysteine 135. Asparagine 98 is a glycosylation site (N-linked (GlcNAc...) asparagine).

Belongs to the Wnt family. In terms of processing, palmitoleoylation is required for efficient binding to frizzled receptors. Depalmitoleoylation leads to Wnt signaling pathway inhibition. In adults, in brain and lung.

The protein localises to the secreted. It localises to the extracellular space. The protein resides in the extracellular matrix. In terms of biological role, ligand for members of the frizzled family of seven transmembrane receptors that functions in the canonical Wnt/beta-catenin signaling pathway. Required for normal fusion of the chorion and the allantois during placenta development. Required for central nervous system (CNS) angiogenesis and blood-brain barrier regulation. The sequence is that of Protein Wnt-7b (wnt7b) from Xenopus laevis (African clawed frog).